Consider the following 130-residue polypeptide: uncharacterized protein (130 aa).

The segment at 1–62 (MRMYSSDAHE…ASGVGSSCKR (62 aa)) is disordered. Pro residues predominate over residues 21 to 30 (PPHPLPPTGS).

This is an uncharacterized protein from Homo sapiens (Human).